A 700-amino-acid chain; its full sequence is Elongation factor G (700 aa).

Residues 10–285 (DRTRNIGIMA…AVIDYLPSPL (276 aa)) enclose the tr-type G domain. Residues 19–26 (AHIDAGKT), 83–87 (DTPGH), and 137–140 (NKMD) each bind GTP.

The protein belongs to the TRAFAC class translation factor GTPase superfamily. Classic translation factor GTPase family. EF-G/EF-2 subfamily.

Its subcellular location is the cytoplasm. Catalyzes the GTP-dependent ribosomal translocation step during translation elongation. During this step, the ribosome changes from the pre-translocational (PRE) to the post-translocational (POST) state as the newly formed A-site-bound peptidyl-tRNA and P-site-bound deacylated tRNA move to the P and E sites, respectively. Catalyzes the coordinated movement of the two tRNA molecules, the mRNA and conformational changes in the ribosome. The chain is Elongation factor G from Lacticaseibacillus casei (strain BL23) (Lactobacillus casei).